The sequence spans 335 residues: Eukaryotic translation initiation factor 3 subunit H-A (335 aa).

An MPN domain is found at 22-156; that stretch reads IQVDGLVVLK…LKAYRLTPKL (135 aa). Residues 254-272 show a composition bias toward low complexity; the sequence is QQQKQQYQQRRQQENAQRQ. Residues 254-282 are disordered; it reads QQQKQQYQQRRQQENAQRQSRGEPPLPEE.

This sequence belongs to the eIF-3 subunit H family. Component of the eukaryotic translation initiation factor 3 (eIF-3) complex, which is composed of 13 subunits: eif3a, eif3b, eif3c, eif3d, eif3e, eif3f, eif3g, eif3h, eif3i, eif3j, eif3k, eif3l and eif3m.

The protein localises to the cytoplasm. Its function is as follows. Component of the eukaryotic translation initiation factor 3 (eIF-3) complex, which is involved in protein synthesis of a specialized repertoire of mRNAs and, together with other initiation factors, stimulates binding of mRNA and methionyl-tRNAi to the 40S ribosome. The eIF-3 complex specifically targets and initiates translation of a subset of mRNAs involved in cell proliferation. This is Eukaryotic translation initiation factor 3 subunit H-A (eif3ha) from Danio rerio (Zebrafish).